Consider the following 193-residue polypeptide: Probable DNA-directed RNA polymerase subunit delta (193 aa).

In terms of domain architecture, HTH HARE-type spans 14–81 (LALVEIATAI…GNNEWGLRAW (68 aa)). Acidic residues-rich tracts occupy residues 119–174 (DDDV…DDNL) and 182–193 (DLDDLSDGDIEK). The tract at residues 119–193 (DDDVIDYNDD…DDLSDGDIEK (75 aa)) is disordered.

It belongs to the RpoE family. RNAP is composed of a core of 2 alpha, a beta and a beta' subunits. The core is associated with a delta subunit and one of several sigma factors.

Functionally, participates in both the initiation and recycling phases of transcription. In the presence of the delta subunit, RNAP displays an increased specificity of transcription, a decreased affinity for nucleic acids, and an increased efficiency of RNA synthesis because of enhanced recycling. The chain is Probable DNA-directed RNA polymerase subunit delta from Leuconostoc citreum (strain KM20).